The primary structure comprises 209 residues: Cytidylyl-2-hydroxypropylphosphonate hydrolase (209 aa).

Asn-111, Asp-127, Glu-129, and Asp-131 together coordinate a divalent metal cation. The Proton donor role is filled by Lys-144. Residue Asp-145 coordinates a divalent metal cation.

This sequence belongs to the FomD family. As to quaternary structure, monomer in solution. Mn(2+) is required as a cofactor. Requires Co(2+) as cofactor.

It carries out the reaction cytidine 5'-({hydroxy[(S)-2-hydroxypropyl]phosphonoyl}phosphate) + H2O = (S)-2-hydroxypropylphosphonate + CMP + H(+). The protein operates within antibiotic biosynthesis; fosfomycin biosynthesis. Its activity is regulated as follows. Hydrolysis of (S)-HPP-CMP is inhibited by CDP. Involved in fosfomycin biosynthesis. Catalyzes the hydrolysis of cytidylyl (S)-2-hydroxypropylphosphonate ((S)-HPP-CMP) to give (S)-2-hydroxypropylphosphonate ((S)-HPP) and CMP. Can also hydrolyze (R)-HPP-CMP and cytidylyl 2-hydroxyethylphosphonate (HEP-CMP), which is a biosynthetic intermediate before C-methylation, but the catalytic efficiency is much higher with (S)-HPP-CMP. The polypeptide is Cytidylyl-2-hydroxypropylphosphonate hydrolase (Streptomyces wedmorensis).